A 395-amino-acid chain; its full sequence is MSILATEKEKEFMIVNMGPHHPSMHGVLRLIVTLDGEDVIDCEPILGYLHRGMEKIAENRTIIQYLPYVTRWDYLATMFTEAITVNGPEQLGNIRVPKRASYIRVIMLELSRIASHLLWLGPFMADIGAQTPFFYIFRERELVYDLFEAATGMRMMHNYFRIGGVAADLPYGWIDKCLDFCDYFLTGVAEYQKLITRNPIFLERVEGVGIIGGEEAINWGLSGPMLRASGIEWDLRKVDHYECYDEFDWEVQWQKEGDSLARYLVRIGEMTESVKIIQQALEGIPGGPYENLEIRCFDRESDPERNDFENRFISKKPSPTFELTKQELYARVEAPKGELGIFLIGDQSGFPWRWKIRPPGFINLQILPQLVKRMKLADIMTILGSIDIIMGEVDR.

It belongs to the complex I 49 kDa subunit family. NDH is composed of at least 16 different subunits, 5 of which are encoded in the nucleus.

Its subcellular location is the plastid. It localises to the chloroplast thylakoid membrane. The enzyme catalyses a plastoquinone + NADH + (n+1) H(+)(in) = a plastoquinol + NAD(+) + n H(+)(out). It carries out the reaction a plastoquinone + NADPH + (n+1) H(+)(in) = a plastoquinol + NADP(+) + n H(+)(out). NDH shuttles electrons from NAD(P)H:plastoquinone, via FMN and iron-sulfur (Fe-S) centers, to quinones in the photosynthetic chain and possibly in a chloroplast respiratory chain. The immediate electron acceptor for the enzyme in this species is believed to be plastoquinone. Couples the redox reaction to proton translocation, and thus conserves the redox energy in a proton gradient. In Citrus sinensis (Sweet orange), this protein is NAD(P)H-quinone oxidoreductase subunit H, chloroplastic.